Consider the following 375-residue polypeptide: Chaperone protein DnaJ (375 aa).

The region spanning 5-69 (DYYEVLGVSK…QKRAQYDQFG (65 aa)) is the J domain. Residues 132 to 214 (GKETIIEIPR…CGGTGKVKKR (83 aa)) form a CR-type zinc finger. 8 residues coordinate Zn(2+): cysteine 145, cysteine 148, cysteine 162, cysteine 165, cysteine 188, cysteine 191, cysteine 202, and cysteine 205. CXXCXGXG motif repeat units follow at residues 145-152 (CETCKGSG), 162-169 (CSHCGGSG), 188-195 (CHHCEGTG), and 202-209 (CSDCGGTG).

It belongs to the DnaJ family. As to quaternary structure, homodimer. It depends on Zn(2+) as a cofactor.

It localises to the cytoplasm. In terms of biological role, participates actively in the response to hyperosmotic and heat shock by preventing the aggregation of stress-denatured proteins and by disaggregating proteins, also in an autonomous, DnaK-independent fashion. Unfolded proteins bind initially to DnaJ; upon interaction with the DnaJ-bound protein, DnaK hydrolyzes its bound ATP, resulting in the formation of a stable complex. GrpE releases ADP from DnaK; ATP binding to DnaK triggers the release of the substrate protein, thus completing the reaction cycle. Several rounds of ATP-dependent interactions between DnaJ, DnaK and GrpE are required for fully efficient folding. Also involved, together with DnaK and GrpE, in the DNA replication of plasmids through activation of initiation proteins. The sequence is that of Chaperone protein DnaJ from Bacillus velezensis (strain DSM 23117 / BGSC 10A6 / LMG 26770 / FZB42) (Bacillus amyloliquefaciens subsp. plantarum).